The primary structure comprises 118 residues: Phosphoribosyl-AMP cyclohydrolase (118 aa).

Aspartate 85 provides a ligand contact to Mg(2+). Residue cysteine 86 coordinates Zn(2+). Residues aspartate 87 and aspartate 89 each contribute to the Mg(2+) site. Positions 102 and 109 each coordinate Zn(2+).

The protein belongs to the PRA-CH family. In terms of assembly, homodimer. Mg(2+) is required as a cofactor. Requires Zn(2+) as cofactor.

The protein resides in the cytoplasm. The catalysed reaction is 1-(5-phospho-beta-D-ribosyl)-5'-AMP + H2O = 1-(5-phospho-beta-D-ribosyl)-5-[(5-phospho-beta-D-ribosylamino)methylideneamino]imidazole-4-carboxamide. Its pathway is amino-acid biosynthesis; L-histidine biosynthesis; L-histidine from 5-phospho-alpha-D-ribose 1-diphosphate: step 3/9. In terms of biological role, catalyzes the hydrolysis of the adenine ring of phosphoribosyl-AMP. This Sulfurisphaera tokodaii (strain DSM 16993 / JCM 10545 / NBRC 100140 / 7) (Sulfolobus tokodaii) protein is Phosphoribosyl-AMP cyclohydrolase.